A 1114-amino-acid polypeptide reads, in one-letter code: MADNRIAGSLPTSSKWSFLPKSVSSHFKPSSNPRSSNPDIENAPPQNPNIHNPRNQSVSSKSTAYKNQMDSPNCRSQVSASRPRAISALKTRNEVEEEGASNPHVKVVVRIKPTKEYCWKVKKVSKVSYSVRDRHFTFDSVLDSNLNQDDVFQQIGVPLVRDALSGYNTSVLSYGQNGSGKTYTMWGPAGSMLEDPSPKGEQGLAPRIFQMLFSEIQREKIKSGGKEVNYQCRCSFLEIYNGQISDLIDQTQRNLKIKDDAKNGIYVENLTEEYVDSYEDVAQILMKGLSSRKVGATSTSFQSSRSHVILSFIVESWNKGASSRCFNTTRTSRINLVDLAGAGTNERDATKHCVEEEKFLKKSLSELGHVVNSLAENVHPGISDRSLHKTSCLTHLLQESLGGNSKLTILCNIFPSDKDTKRTMSTLRFGERAKAMGNKPMINEISEEDVNDLSDQIRLLKEELSKVKADACHSVGSKNDYFGAKNARESLNQLRVSLNRSLMLPKIDNDEEEITVDEDDFKELHLQIKSLRGSFNQKLKKFPVNRDSVNSSFVTAFGESELMDDDEICSEEVEVEENDFGESLEEHDSAATVCKSSEKSRIEEFVSENSISISPCRQSLILQEPIQSESPKFRDSLRKSIALSSSCLRNQNSLAKSIKSTCFAESQHIRSSLRGSKIFTGSTESLAASLRRGLDIIDNPMNPASNRCSVSLSSDNLTMQPPTDDRLPLSPLCPTCRICSSKLPSVVEGDGYHMEGVLEKQQELEKLCSEQAAKIEQLTRLVGQHKLQTEDETEKLMGASNGERLPSANENQLLSCITETYDVKQISDDDSKKTDFDIGEKEALLKEIEDLKKKLQTPVTMSTNELRSSLLARSFQLRSKNAEKDIEEERLRCTEMESEWISLTDEFRVEIETQRTRAEKAEAQLKQEKLSSEELEDALRRAVLGHARFVEHYTELQEKYNDLCSKHKATVEWITELKKAVAKAGKKGCGSRFAKSLASELSALRVERERERDLLKKENISLKIQLRNTAEAVHTAGEVLVRLREAEQSASAAEEKFNEVEEENEKLKKKMEKLKRRHKLEVVTIKKSLKQNTLPESALQPLHQRNSAIEEEGM.

The tract at residues 1-84 is disordered; the sequence is MADNRIAGSL…RSQVSASRPR (84 aa). 2 stretches are compositionally biased toward polar residues: residues 10-39 and 48-80; these read LPTS…SNPD and PNIH…QVSA. Positions 104–436 constitute a Kinesin motor domain; the sequence is HVKVVVRIKP…LRFGERAKAM (333 aa). 175-182 provides a ligand contact to ATP; it reads GQNGSGKT. Coiled-coil stretches lie at residues 761–791, 872–942, and 1038–1081; these read QQEL…QTED, ARSF…LRRA, and EVLV…HKLE. Residues 1092–1114 are disordered; that stretch reads NTLPESALQPLHQRNSAIEEEGM.

It belongs to the TRAFAC class myosin-kinesin ATPase superfamily. Kinesin family. KIN-12 subfamily.

This is Kinesin-like protein KIN-12F from Arabidopsis thaliana (Mouse-ear cress).